Reading from the N-terminus, the 347-residue chain is Heme A synthase (347 aa).

8 consecutive transmembrane segments (helical) span residues 14-34 (VKIWLCICCIGILVMVFIGGI), 96-116 (FHRLLGRIVGLVFLIPFLYFM), 129-149 (FILIAFLILVQGVMGWYMVKS), 162-182 (LAMHLLLALAIFYLLWKHFLL), 199-219 (VFYIIISLITIQITCGALVAG), 260-280 (FIHEVIALLILIIVVITLLVL), 287-307 (MYLLLALLLIQLTLGILTFIY), and 311-331 (IILASLHQVTAFILFASSIYL). A heme-binding site is contributed by His262. Heme is bound at residue His317.

Belongs to the COX15/CtaA family. Type 2 subfamily. As to quaternary structure, interacts with CtaB. Heme b serves as cofactor.

Its subcellular location is the cell membrane. The catalysed reaction is Fe(II)-heme o + 2 A + H2O = Fe(II)-heme a + 2 AH2. Its pathway is porphyrin-containing compound metabolism; heme A biosynthesis; heme A from heme O: step 1/1. Functionally, catalyzes the conversion of heme O to heme A by two successive hydroxylations of the methyl group at C8. The first hydroxylation forms heme I, the second hydroxylation results in an unstable dihydroxymethyl group, which spontaneously dehydrates, resulting in the formyl group of heme A. The protein is Heme A synthase of Ehrlichia ruminantium (strain Welgevonden).